The following is a 103-amino-acid chain: Large ribosomal subunit protein bL21 (103 aa).

This sequence belongs to the bacterial ribosomal protein bL21 family. Part of the 50S ribosomal subunit. Contacts protein L20.

This protein binds to 23S rRNA in the presence of protein L20. The sequence is that of Large ribosomal subunit protein bL21 from Haemophilus ducreyi (strain 35000HP / ATCC 700724).